Here is a 304-residue protein sequence, read N- to C-terminus: MISTVQDSLEGHFHVLTPIKLNLALHIVGQRTDGYHLLESLVYFSLSGDCLSYAPCERDRFILTGPFAKGLSCNSINLAVRARDFMHKTFPRSAKPSSFQLMKTLPVASGIGGGSGDAASILNILRQKWKLDCSCEELAEMSLALGADVPMCLFALEYQQPLFVKGIGNDVTRLEEACSIAMVLVNHGQKIATETIFNALEKRNHPPLKINPVALKTVSSLVEVLQETRNDLFIPALKIAPQLAEVLSTLDESGSLFSRMSGSGATCFGIFKDQQAAQKAAAFIKSMHPNWFVKSIITLGRSSQ.

Lys-20 is a catalytic residue. 106-116 contacts ATP; sequence PVASGIGGGSG. Asp-148 is an active-site residue.

This sequence belongs to the GHMP kinase family. IspE subfamily.

The enzyme catalyses 4-CDP-2-C-methyl-D-erythritol + ATP = 4-CDP-2-C-methyl-D-erythritol 2-phosphate + ADP + H(+). Its pathway is isoprenoid biosynthesis; isopentenyl diphosphate biosynthesis via DXP pathway; isopentenyl diphosphate from 1-deoxy-D-xylulose 5-phosphate: step 3/6. Functionally, catalyzes the phosphorylation of the position 2 hydroxy group of 4-diphosphocytidyl-2C-methyl-D-erythritol. The protein is 4-diphosphocytidyl-2-C-methyl-D-erythritol kinase of Bartonella bacilliformis (strain ATCC 35685 / KC583 / Herrer 020/F12,63).